A 212-amino-acid chain; its full sequence is Amelotin (212 aa).

Residues 1-16 (MKTVVLLLCLLGSAQS) form the signal peptide. 2 disordered regions span residues 23-42 (PALG…PLTQ) and 141-212 (PSGQ…NRTK). Polar residues-rich tracts occupy residues 33 to 42 (TPGQVTPLTQ) and 165 to 178 (PANQ…TTPA).

The protein belongs to the amelotin family. In terms of processing, O-glycosylated. Phosphorylated by FAM20C in vitro. In terms of tissue distribution, highest expression in the mandible. Found in the basal lamina of maturation stage ameloblasts of incisors and unerupted molars. Also found in the internal basal lamina of junctional epithelium in molars.

The protein localises to the secreted. In terms of biological role, is a promoter of calcium phosphate mineralization, playing a critical role in the formation of the compact, mineralized, aprismatic enamel surface layer during the maturation stage of amelogenesis. This Rattus norvegicus (Rat) protein is Amelotin.